Reading from the N-terminus, the 209-residue chain is Methylthioribulose-1-phosphate dehydratase (209 aa).

Zn(2+)-binding residues include His-98 and His-100.

Belongs to the aldolase class II family. MtnB subfamily. Homotetramer. Zn(2+) is required as a cofactor.

It catalyses the reaction 5-(methylsulfanyl)-D-ribulose 1-phosphate = 5-methylsulfanyl-2,3-dioxopentyl phosphate + H2O. The protein operates within amino-acid biosynthesis; L-methionine biosynthesis via salvage pathway; L-methionine from S-methyl-5-thio-alpha-D-ribose 1-phosphate: step 2/6. In terms of biological role, catalyzes the dehydration of methylthioribulose-1-phosphate (MTRu-1-P) into 2,3-diketo-5-methylthiopentyl-1-phosphate (DK-MTP-1-P). The sequence is that of Methylthioribulose-1-phosphate dehydratase (mtnB) from Bacillus subtilis (strain 168).